The sequence spans 164 residues: Phosphopantetheine adenylyltransferase (164 aa).

Residue Ser9 coordinates substrate. ATP-binding positions include 9-10 and His17; that span reads SF. Lys41, Leu73, and Lys87 together coordinate substrate. Residues 88–90, Glu98, and 122–128 each bind ATP; these read GLR and YSYLSSS.

This sequence belongs to the bacterial CoaD family. In terms of assembly, homohexamer. Mg(2+) is required as a cofactor.

The protein resides in the cytoplasm. It catalyses the reaction (R)-4'-phosphopantetheine + ATP + H(+) = 3'-dephospho-CoA + diphosphate. The protein operates within cofactor biosynthesis; coenzyme A biosynthesis; CoA from (R)-pantothenate: step 4/5. Its function is as follows. Reversibly transfers an adenylyl group from ATP to 4'-phosphopantetheine, yielding dephospho-CoA (dPCoA) and pyrophosphate. In Rhodococcus jostii (strain RHA1), this protein is Phosphopantetheine adenylyltransferase.